We begin with the raw amino-acid sequence, 288 residues long: Shikimate dehydrogenase (NADP(+)) (288 aa).

Shikimate contacts are provided by residues 21 to 23 and threonine 68; that span reads SLS. Lysine 72 functions as the Proton acceptor in the catalytic mechanism. Shikimate-binding residues include asparagine 93 and aspartate 108. NADP(+)-binding positions include 132-136 and leucine 230; that span reads GNGGA. A shikimate-binding site is contributed by tyrosine 232. Glycine 253 is a binding site for NADP(+).

The protein belongs to the shikimate dehydrogenase family. Homodimer.

It catalyses the reaction shikimate + NADP(+) = 3-dehydroshikimate + NADPH + H(+). Its pathway is metabolic intermediate biosynthesis; chorismate biosynthesis; chorismate from D-erythrose 4-phosphate and phosphoenolpyruvate: step 4/7. Functionally, involved in the biosynthesis of the chorismate, which leads to the biosynthesis of aromatic amino acids. Catalyzes the reversible NADPH linked reduction of 3-dehydroshikimate (DHSA) to yield shikimate (SA). The polypeptide is Shikimate dehydrogenase (NADP(+)) (Crocosphaera subtropica (strain ATCC 51142 / BH68) (Cyanothece sp. (strain ATCC 51142))).